A 90-amino-acid chain; its full sequence is DNA-directed RNA polymerase subunit omega (90 aa).

Residues 69–90 (RQEQQEQEAAELAAVSSIARNR) are disordered.

The protein belongs to the RNA polymerase subunit omega family. As to quaternary structure, the RNAP catalytic core consists of 2 alpha, 1 beta, 1 beta' and 1 omega subunit. When a sigma factor is associated with the core the holoenzyme is formed, which can initiate transcription.

The enzyme catalyses RNA(n) + a ribonucleoside 5'-triphosphate = RNA(n+1) + diphosphate. Promotes RNA polymerase assembly. Latches the N- and C-terminal regions of the beta' subunit thereby facilitating its interaction with the beta and alpha subunits. This chain is DNA-directed RNA polymerase subunit omega, found in Vibrio vulnificus (strain CMCP6).